Reading from the N-terminus, the 874-residue chain is Bifunctional uridylyltransferase/uridylyl-removing enzyme (874 aa).

The interval 1–332 is uridylyltransferase; the sequence is MTLQSPLTFR…NGGASEDAEI (332 aa). Positions 333–692 are uridylyl-removing; it reads IDEDFQRRGA…ISKKATRGGT (360 aa). Residues 451–573 form the HD domain; that stretch reads VDEHSIRLLK…VRDEEYLEYL (123 aa). 2 ACT domains span residues 693 to 777 and 800 to 874; these read EVFV…RTPN and LMEF…SVSA.

It belongs to the GlnD family. It depends on Mg(2+) as a cofactor.

It catalyses the reaction [protein-PII]-L-tyrosine + UTP = [protein-PII]-uridylyl-L-tyrosine + diphosphate. The catalysed reaction is [protein-PII]-uridylyl-L-tyrosine + H2O = [protein-PII]-L-tyrosine + UMP + H(+). Its activity is regulated as follows. Uridylyltransferase (UTase) activity is inhibited by glutamine, while glutamine activates uridylyl-removing (UR) activity. In terms of biological role, modifies, by uridylylation and deuridylylation, the PII regulatory proteins (GlnB and homologs), in response to the nitrogen status of the cell that GlnD senses through the glutamine level. Under low glutamine levels, catalyzes the conversion of the PII proteins and UTP to PII-UMP and PPi, while under higher glutamine levels, GlnD hydrolyzes PII-UMP to PII and UMP (deuridylylation). Thus, controls uridylylation state and activity of the PII proteins, and plays an important role in the regulation of nitrogen assimilation and metabolism. In Vibrio campbellii (strain ATCC BAA-1116), this protein is Bifunctional uridylyltransferase/uridylyl-removing enzyme.